We begin with the raw amino-acid sequence, 90 residues long: Small ribosomal subunit protein uS15 (90 aa).

The protein belongs to the universal ribosomal protein uS15 family. Part of the 30S ribosomal subunit. Forms a bridge to the 50S subunit in the 70S ribosome, contacting the 23S rRNA.

In terms of biological role, one of the primary rRNA binding proteins, it binds directly to 16S rRNA where it helps nucleate assembly of the platform of the 30S subunit by binding and bridging several RNA helices of the 16S rRNA. Functionally, forms an intersubunit bridge (bridge B4) with the 23S rRNA of the 50S subunit in the ribosome. This Blochmanniella floridana protein is Small ribosomal subunit protein uS15.